Consider the following 338-residue polypeptide: Fructose-1,6-bisphosphatase class 1 (338 aa).

Positions 94, 116, 118, and 119 each coordinate Mg(2+). Residues Asp-119–Ser-122, Asn-210, and Lys-276 each bind substrate. Glu-282 is a Mg(2+) binding site.

Belongs to the FBPase class 1 family. As to quaternary structure, homotetramer. It depends on Mg(2+) as a cofactor.

It localises to the cytoplasm. The enzyme catalyses beta-D-fructose 1,6-bisphosphate + H2O = beta-D-fructose 6-phosphate + phosphate. Its pathway is carbohydrate biosynthesis; gluconeogenesis. The polypeptide is Fructose-1,6-bisphosphatase class 1 (Paraburkholderia phytofirmans (strain DSM 17436 / LMG 22146 / PsJN) (Burkholderia phytofirmans)).